The following is a 685-amino-acid chain: Mitotic interactor and substrate of PLK1 (685 aa).

Ser-78 carries the post-translational modification Phosphoserine; by CDK1. Disordered regions lie at residues 155–181 and 207–253; these read SGTVATLQAAPDHGDPRTPGPPRSTPL and NKEV…QGKG. Thr-172 carries the phosphothreonine; by CDK1 modification. Position 179 is a phosphothreonine (Thr-179). At Ser-214 the chain carries Phosphoserine; by CDK1. Residue Thr-219 is modified to Phosphothreonine. Ser-284 carries the phosphoserine; by CDK1 modification. Thr-287 bears the Phosphothreonine; by CDK1 mark. The interval 345–499 is disordered; it reads GRPSLYVQRD…PWKLPRGSPQ (155 aa). Phosphoserine is present on Ser-348. Basic and acidic residues predominate over residues 355–371; it reads MVQETQREEDHRREGLH. Thr-377 carries the post-translational modification Phosphothreonine; by CDK1. Residue Ser-382 is modified to Phosphoserine. The segment covering 392-417 has biased composition (low complexity); it reads ALSSDSILSPDSILSPAPDARAADPA. Phosphoserine; by PLK1 occurs at positions 394, 395, and 397. Phosphoserine is present on residues Ser-406 and Ser-436. The segment covering 454 to 469 has biased composition (polar residues); that stretch reads SGLSTVDTEAATSPKA. Ser-477 carries the post-translational modification Phosphoserine; by PLK1. A compositionally biased stretch (polar residues) spans 478–488; it reads ESSGKPMSTKQ. Phosphoserine is present on residues Ser-547 and Ser-549. A coiled-coil region spans residues 551–575; it reads DLLERERESVLRREREVAEERRNAL. Disordered regions lie at residues 575–607 and 629–651; these read LFPEVFSPTPDESCDQNSRSSSQASGITGSYSV and PVDSAPPGQRKKEQWYAGINPSD. Ser-581 is modified (phosphoserine; by PLK1). Phosphothreonine is present on Thr-583. Residues 589 to 607 are compositionally biased toward polar residues; it reads DQNSRSSSQASGITGSYSV. The residue at position 592 (Ser-592) is a Phosphoserine; by PLK1. The residue at position 681 (Ser-681) is a Phosphoserine.

The protein belongs to the MISP family. In terms of assembly, associates with F-actin. Interacts with DCTN1; this interaction regulates DCTN1 distribution at the cell cortex. Interacts with PTK2/FAK and MAPRE1. Phosphorylated by CDK1 and PLK1. CDK1 is the priming kinase for PLK1 phosphorylation. Phosphorylation by PLK1 is required for proper spindle orientation at metaphase.

The protein resides in the cell junction. It localises to the focal adhesion. Its subcellular location is the cytoplasm. It is found in the cytoskeleton. The protein localises to the cell cortex. In terms of biological role, plays a role in mitotic spindle orientation and mitotic progression. Regulates the distribution of dynactin at the cell cortex in a PLK1-dependent manner, thus stabilizing cortical and astral microtubule attachments required for proper mitotic spindle positioning. May link microtubules to the actin cytospkeleton and focal adhesions. May be required for directed cell migration and centrosome orientation. May also be necessary for proper stacking of the Golgi apparatus. This is Mitotic interactor and substrate of PLK1 from Pongo abelii (Sumatran orangutan).